Consider the following 977-residue polypeptide: Kinesin-like protein KIN-14D (977 aa).

The span at 1 to 13 (MSSSNNAAAAAAS) shows a compositional bias: low complexity. The tract at residues 1–20 (MSSSNNAAAAAASPDPSRRR) is disordered. Positions 17 to 118 (SRRREDVVGW…CILALKDRFG (102 aa)) constitute a Calponin-homology (CH) domain. Residues 297–384 (KAEETQRIED…TKRRIELEEL (88 aa)) are a coiled coil. The 329-residue stretch at 472 to 800 (NIRVYCRIRP…LKFAERVSGV (329 aa)) folds into the Kinesin motor domain. ATP is bound at residue 556–563 (GQTGSGKT). The stretch at 812–847 (KEGKDVKELMDQLSLLKDTISKKDEEIDRLQLLNSS) forms a coiled coil. The disordered stretch occupies residues 852 to 977 (PTRQADSVLK…RNNSTLKRGP (126 aa)). Polar residues-rich tracts occupy residues 861 to 879 (KHSS…TSVG) and 956 to 977 (RKSS…KRGP).

It belongs to the TRAFAC class myosin-kinesin ATPase superfamily. Kinesin family. KIN-14 subfamily.

In Oryza sativa subsp. japonica (Rice), this protein is Kinesin-like protein KIN-14D.